The chain runs to 525 residues: Mitochondrial-processing peptidase subunit alpha (525 aa).

A mitochondrion-targeting transit peptide spans 1–33; the sequence is MAAVVLAATRLLRGSGSWGCSRLRFGPPAYRRF. The residue at position 64 (Lys-64) is an N6-succinyllysine. Lys-299 is modified (N6-acetyllysine).

Belongs to the peptidase M16 family. As to quaternary structure, heterodimer of PMPCA (alpha) and PMPCB (beta) subunits, forming the mitochondrial processing protease (MPP) in which PMPCA is involved in substrate recognition and binding and PMPCB is the catalytic subunit.

It is found in the mitochondrion matrix. The protein localises to the mitochondrion inner membrane. Its function is as follows. Substrate recognition and binding subunit of the essential mitochondrial processing protease (MPP), which cleaves the mitochondrial sequence off newly imported precursors proteins. The chain is Mitochondrial-processing peptidase subunit alpha (PMPCA) from Pongo abelii (Sumatran orangutan).